Consider the following 338-residue polypeptide: H(2)-forming methylenetetrahydromethanopterin dehydrogenase-related protein MJ0715 (338 aa).

Belongs to the HMD family.

The sequence is that of H(2)-forming methylenetetrahydromethanopterin dehydrogenase-related protein MJ0715 from Methanocaldococcus jannaschii (strain ATCC 43067 / DSM 2661 / JAL-1 / JCM 10045 / NBRC 100440) (Methanococcus jannaschii).